The primary structure comprises 351 residues: Biotin synthase (351 aa).

The region spanning 48–265 is the Radical SAM core domain; it reads NKVRIHILDN…LCMFRLINPD (218 aa). [4Fe-4S] cluster contacts are provided by Cys-63, Cys-67, and Cys-70. [2Fe-2S] cluster is bound by residues Cys-107, Cys-139, Cys-199, and Arg-269.

This sequence belongs to the radical SAM superfamily. Biotin synthase family. As to quaternary structure, homodimer. It depends on [4Fe-4S] cluster as a cofactor. The cofactor is [2Fe-2S] cluster.

The enzyme catalyses (4R,5S)-dethiobiotin + (sulfur carrier)-SH + 2 reduced [2Fe-2S]-[ferredoxin] + 2 S-adenosyl-L-methionine = (sulfur carrier)-H + biotin + 2 5'-deoxyadenosine + 2 L-methionine + 2 oxidized [2Fe-2S]-[ferredoxin]. Its pathway is cofactor biosynthesis; biotin biosynthesis; biotin from 7,8-diaminononanoate: step 2/2. Catalyzes the conversion of dethiobiotin (DTB) to biotin by the insertion of a sulfur atom into dethiobiotin via a radical-based mechanism. This Leptospira interrogans serogroup Icterohaemorrhagiae serovar Lai (strain 56601) protein is Biotin synthase.